The sequence spans 156 residues: Small ribosomal subunit protein uS7 (156 aa).

It belongs to the universal ribosomal protein uS7 family. As to quaternary structure, part of the 30S ribosomal subunit. Contacts proteins S9 and S11.

Functionally, one of the primary rRNA binding proteins, it binds directly to 16S rRNA where it nucleates assembly of the head domain of the 30S subunit. Is located at the subunit interface close to the decoding center, probably blocks exit of the E-site tRNA. The protein is Small ribosomal subunit protein uS7 of Mycobacterium ulcerans (strain Agy99).